The primary structure comprises 335 residues: Glyceraldehyde-3-phosphate dehydrogenase (335 aa).

NAD(+) is bound by residues 12–13 (RI), Asp34, and Lys79. D-glyceraldehyde 3-phosphate contacts are provided by residues 150 to 152 (SCT), Thr181, 210 to 211 (TG), and Arg233. Cys151 acts as the Nucleophile in catalysis. Asn315 provides a ligand contact to NAD(+).

Belongs to the glyceraldehyde-3-phosphate dehydrogenase family. As to quaternary structure, homotetramer.

Its subcellular location is the cytoplasm. It carries out the reaction D-glyceraldehyde 3-phosphate + phosphate + NAD(+) = (2R)-3-phospho-glyceroyl phosphate + NADH + H(+). The protein operates within carbohydrate degradation; glycolysis; pyruvate from D-glyceraldehyde 3-phosphate: step 1/5. This chain is Glyceraldehyde-3-phosphate dehydrogenase (GPD), found in Debaryomyces hansenii (strain ATCC 36239 / CBS 767 / BCRC 21394 / JCM 1990 / NBRC 0083 / IGC 2968) (Yeast).